The sequence spans 256 residues: Undecaprenyl-diphosphatase (256 aa).

Helical transmembrane passes span 1 to 21 (MDIF…FLPV), 41 to 61 (FHKT…LALF), 69 to 89 (VDIW…GFLL), 96 to 116 (LFAP…FLVL), 172 to 192 (VAAE…TGYD), 207 to 227 (ALGV…KGFL), and 233 to 253 (FNFV…LFYL).

It belongs to the UppP family.

It is found in the cell inner membrane. It catalyses the reaction di-trans,octa-cis-undecaprenyl diphosphate + H2O = di-trans,octa-cis-undecaprenyl phosphate + phosphate + H(+). Its function is as follows. Catalyzes the dephosphorylation of undecaprenyl diphosphate (UPP). Confers resistance to bacitracin. This Wolinella succinogenes (strain ATCC 29543 / DSM 1740 / CCUG 13145 / JCM 31913 / LMG 7466 / NCTC 11488 / FDC 602W) (Vibrio succinogenes) protein is Undecaprenyl-diphosphatase.